A 453-amino-acid polypeptide reads, in one-letter code: Methylenetetrahydrofolate--tRNA-(uracil-5-)-methyltransferase TrmFO (453 aa).

10 to 15 (GGGLAG) contacts FAD. The segment at 433 to 453 (ELAPWIDSAPPTAVPAAPAAG) is disordered. The span at 441–453 (APPTAVPAAPAAG) shows a compositional bias: low complexity.

Belongs to the MnmG family. TrmFO subfamily. The cofactor is FAD.

It localises to the cytoplasm. It carries out the reaction uridine(54) in tRNA + (6R)-5,10-methylene-5,6,7,8-tetrahydrofolate + NADH + H(+) = 5-methyluridine(54) in tRNA + (6S)-5,6,7,8-tetrahydrofolate + NAD(+). The enzyme catalyses uridine(54) in tRNA + (6R)-5,10-methylene-5,6,7,8-tetrahydrofolate + NADPH + H(+) = 5-methyluridine(54) in tRNA + (6S)-5,6,7,8-tetrahydrofolate + NADP(+). Its function is as follows. Catalyzes the folate-dependent formation of 5-methyl-uridine at position 54 (M-5-U54) in all tRNAs. In Anaeromyxobacter dehalogenans (strain 2CP-1 / ATCC BAA-258), this protein is Methylenetetrahydrofolate--tRNA-(uracil-5-)-methyltransferase TrmFO.